A 368-amino-acid chain; its full sequence is Peptide chain release factor 2 (368 aa).

Residue Gln250 is modified to N5-methylglutamine.

The protein belongs to the prokaryotic/mitochondrial release factor family. Post-translationally, methylated by PrmC. Methylation increases the termination efficiency of RF2.

The protein localises to the cytoplasm. Its function is as follows. Peptide chain release factor 2 directs the termination of translation in response to the peptide chain termination codons UGA and UAA. The polypeptide is Peptide chain release factor 2 (Chlamydia trachomatis serovar L2b (strain UCH-1/proctitis)).